We begin with the raw amino-acid sequence, 702 residues long: Dynein intermediate chain 2, ciliary (702 aa).

Residues 1-11 are compositionally biased toward low complexity; sequence MPVKSTKTKGG. 3 disordered regions span residues 1 to 64, 128 to 226, and 243 to 272; these read MPVK…IKPD, DEAR…FSST, and QEKA…ETQS. Basic and acidic residues-rich tracts occupy residues 36–52 and 152–176; these read GKKD…HGGE and GEEK…RDEE. The segment covering 189 to 206 has biased composition (polar residues); it reads KLTNQFNFSERASQTYNN. The segment covering 243–261 has biased composition (basic and acidic residues); that stretch reads QEKAKEKKAAPSKKDDDKS. 6 WD repeats span residues 380–420, 429–472, 490–533, 537–577, 580–620, and 628–667; these read PTDS…ANPV, KHTD…LTYT, TQLT…QFLD, AHHM…GPMF, DLGS…YEPI, and KKKT…RKVP.

The protein belongs to the dynein intermediate chain family. Consists of at least two heavy chains (alpha and beta), three intermediate chains and several light chains.

The protein localises to the cytoplasm. The protein resides in the cytoskeleton. It localises to the cilium axoneme. Functionally, microtubule-binding protein that may be involved in dynein outer arm assembly on the axoneme. The protein is Dynein intermediate chain 2, ciliary of Heliocidaris crassispina (Sea urchin).